Here is a 506-residue protein sequence, read N- to C-terminus: Histidine ammonia-lyase (506 aa).

Positions 143-145 form a cross-link, 5-imidazolinone (Ala-Gly); the sequence is ASG. Residue serine 144 is modified to 2,3-didehydroalanine (Ser).

This sequence belongs to the PAL/histidase family. Post-translationally, contains an active site 4-methylidene-imidazol-5-one (MIO), which is formed autocatalytically by cyclization and dehydration of residues Ala-Ser-Gly.

Its subcellular location is the cytoplasm. The enzyme catalyses L-histidine = trans-urocanate + NH4(+). Its pathway is amino-acid degradation; L-histidine degradation into L-glutamate; N-formimidoyl-L-glutamate from L-histidine: step 1/3. This chain is Histidine ammonia-lyase, found in Salmonella paratyphi A (strain ATCC 9150 / SARB42).